The chain runs to 204 residues: Small ribosomal subunit protein uS4 (204 aa).

Positions 94-157 (RRLDNVVYRL…KKLEVFKENL (64 aa)) constitute an S4 RNA-binding domain.

Belongs to the universal ribosomal protein uS4 family. Part of the 30S ribosomal subunit. Contacts protein S5. The interaction surface between S4 and S5 is involved in control of translational fidelity.

One of the primary rRNA binding proteins, it binds directly to 16S rRNA where it nucleates assembly of the body of the 30S subunit. Its function is as follows. With S5 and S12 plays an important role in translational accuracy. In Sulfurihydrogenibium sp. (strain YO3AOP1), this protein is Small ribosomal subunit protein uS4.